Reading from the N-terminus, the 202-residue chain is Holliday junction branch migration complex subunit RuvA (202 aa).

Positions 1–65 (MIAYVEGRVA…EDALELFGFS (65 aa)) are domain I. The segment at 66-144 (TWDERQTFMV…VEDLPAGLVL (79 aa)) is domain II. Residues 145–155 (AGGAAPGGVFR) form a flexible linker region. Positions 155 to 202 (RDALAGLGNLGYLEDEAAPVLKEVLKAEPDLDVAGALRAALKALARGR) are domain III.

Belongs to the RuvA family. Homotetramer. Forms an RuvA(8)-RuvB(12)-Holliday junction (HJ) complex. HJ DNA is sandwiched between 2 RuvA tetramers; dsDNA enters through RuvA and exits via RuvB. An RuvB hexamer assembles on each DNA strand where it exits the tetramer. Each RuvB hexamer is contacted by two RuvA subunits (via domain III) on 2 adjacent RuvB subunits; this complex drives branch migration. In the full resolvosome a probable DNA-RuvA(4)-RuvB(12)-RuvC(2) complex forms which resolves the HJ.

It localises to the cytoplasm. In terms of biological role, the RuvA-RuvB-RuvC complex processes Holliday junction (HJ) DNA during genetic recombination and DNA repair, while the RuvA-RuvB complex plays an important role in the rescue of blocked DNA replication forks via replication fork reversal (RFR). RuvA specifically binds to HJ cruciform DNA, conferring on it an open structure. The RuvB hexamer acts as an ATP-dependent pump, pulling dsDNA into and through the RuvAB complex. HJ branch migration allows RuvC to scan DNA until it finds its consensus sequence, where it cleaves and resolves the cruciform DNA. The sequence is that of Holliday junction branch migration complex subunit RuvA from Nitratidesulfovibrio vulgaris (strain DSM 19637 / Miyazaki F) (Desulfovibrio vulgaris).